Here is a 280-residue protein sequence, read N- to C-terminus: UDP-3-O-acyl-N-acetylglucosamine deacetylase (280 aa).

His77, His238, and Asp242 together coordinate Zn(2+). The active-site Proton donor is His265.

This sequence belongs to the LpxC family. The cofactor is Zn(2+).

The catalysed reaction is a UDP-3-O-[(3R)-3-hydroxyacyl]-N-acetyl-alpha-D-glucosamine + H2O = a UDP-3-O-[(3R)-3-hydroxyacyl]-alpha-D-glucosamine + acetate. The protein operates within glycolipid biosynthesis; lipid IV(A) biosynthesis; lipid IV(A) from (3R)-3-hydroxytetradecanoyl-[acyl-carrier-protein] and UDP-N-acetyl-alpha-D-glucosamine: step 2/6. Functionally, catalyzes the hydrolysis of UDP-3-O-myristoyl-N-acetylglucosamine to form UDP-3-O-myristoylglucosamine and acetate, the committed step in lipid A biosynthesis. In Nostoc sp. (strain PCC 7120 / SAG 25.82 / UTEX 2576), this protein is UDP-3-O-acyl-N-acetylglucosamine deacetylase.